The primary structure comprises 231 residues: Phosphatidylserine decarboxylase proenzyme (231 aa).

Catalysis depends on serine 188, which acts as the Schiff-base intermediate with substrate; via pyruvic acid. The residue at position 188 (serine 188) is a Pyruvic acid (Ser); by autocatalysis.

It belongs to the phosphatidylserine decarboxylase family. PSD-A subfamily. In terms of assembly, heterodimer of a large membrane-associated beta subunit and a small pyruvoyl-containing alpha subunit. Pyruvate is required as a cofactor. Post-translationally, is synthesized initially as an inactive proenzyme. Formation of the active enzyme involves a self-maturation process in which the active site pyruvoyl group is generated from an internal serine residue via an autocatalytic post-translational modification. Two non-identical subunits are generated from the proenzyme in this reaction, and the pyruvate is formed at the N-terminus of the alpha chain, which is derived from the carboxyl end of the proenzyme. The post-translation cleavage follows an unusual pathway, termed non-hydrolytic serinolysis, in which the side chain hydroxyl group of the serine supplies its oxygen atom to form the C-terminus of the beta chain, while the remainder of the serine residue undergoes an oxidative deamination to produce ammonia and the pyruvoyl prosthetic group on the alpha chain.

It is found in the cell membrane. It catalyses the reaction a 1,2-diacyl-sn-glycero-3-phospho-L-serine + H(+) = a 1,2-diacyl-sn-glycero-3-phosphoethanolamine + CO2. It functions in the pathway phospholipid metabolism; phosphatidylethanolamine biosynthesis; phosphatidylethanolamine from CDP-diacylglycerol: step 2/2. In terms of biological role, catalyzes the formation of phosphatidylethanolamine (PtdEtn) from phosphatidylserine (PtdSer). This Rickettsia prowazekii (strain Madrid E) protein is Phosphatidylserine decarboxylase proenzyme.